Consider the following 225-residue polypeptide: MQFKNVALAASVAALSATASAEGYTPGEPWSTLTPTGSISCGAAEYTTTFGIAVQAITSSKAKRDVISQIGDGQVQATSAAATDSQVQASSTATPTSSEKISSSASKTSSTNATSSSCATPSLKDSSCKNSGTLELTLKDGVLTDAKGRIGSIVANRQFQFDGPPPQAGAIYAAGWSITEDGYLALGDSDVFYQCLSGNFYNLYDQNVAEQCSAIHLEAVSLVDC.

The signal sequence occupies residues 1–21 (MQFKNVALAASVAALSATASA). Positions 22-64 (EGYTPGEPWSTLTPTGSISCGAAEYTTTFGIAVQAITSSKAKR) are excised as a propeptide. The PIR1/2/3 repeat unit spans residues 65–82 (DVISQIGDGQVQATSAAA). A glycan (O-linked (Man) serine) is linked at serine 68. Residue threonine 78 is glycosylated (O-linked (Man) threonine). The span at 78-92 (TSAAATDSQVQASST) shows a compositional bias: polar residues. A disordered region spans residues 78 to 128 (TSAAATDSQVQASSTATPTSSEKISSSASKTSSTNATSSSCATPSLKDSSC). A compositionally biased stretch (low complexity) spans 93–122 (ATPTSSEKISSSASKTSSTNATSSSCATPS). Residues serine 102, serine 103, serine 104, and serine 106 are each glycosylated (O-linked (Man) serine). Threonine 108 carries an O-linked (Man) threonine glycan. O-linked (Man) serine glycosylation is present at serine 109. O-linked (Man) threonine glycans are attached at residues threonine 111 and threonine 114. 2 O-linked (Man) serine glycosylation sites follow: serine 115 and serine 116.

Belongs to the PIR protein family. In terms of processing, covalently linked to beta-1,3-glucan of the inner cell wall layer via an alkali-sensitive ester linkage between the gamma-carboxyl group of glutamic acid, arising from Gln-74 within the PIR1/2/3 repeat, and hydroxyl groups of glucoses of beta-1,3-glucan chains. Extensively O-mannosylated.

The protein resides in the secreted. It is found in the cell wall. Its function is as follows. Component of the outer cell wall layer. Required for stability of the cell wall and for optimal growth. Required for resistance against several antifungal and cell wall-perturbing agents. The polypeptide is Cell wall mannoprotein CIS3 (CIS3) (Saccharomyces cerevisiae (strain AWRI1631) (Baker's yeast)).